The sequence spans 158 residues: Snaclec stejaggregin-A subunit alpha (158 aa).

An N-terminal signal peptide occupies residues 1–23 (MGRFISVSFGLLVVFLSLSGTGA). 3 disulfides stabilise this stretch: Cys-27–Cys-38, Cys-55–Cys-152, and Cys-127–Cys-144. One can recognise a C-type lectin domain in the interval 34 to 153 (YDWYCYKPFN…CQAKNPFVCK (120 aa)).

This sequence belongs to the snaclec family. Heteromultimer; disulfide-linked. As to expression, expressed by the venom gland.

It localises to the secreted. Functionally, interferes with one step of hemostasis (modulation of platelet aggregation, or coagulation cascade, for example). The chain is Snaclec stejaggregin-A subunit alpha from Trimeresurus stejnegeri (Chinese green tree viper).